An 87-amino-acid chain; its full sequence is Small ribosomal subunit protein eS21 (87 aa).

Met-1 is modified (N-acetylmethionine).

Belongs to the eukaryotic ribosomal protein eS21 family. As to quaternary structure, component of the small ribosomal subunit (SSU). Mature yeast ribosomes consist of a small (40S) and a large (60S) subunit. The 40S small subunit contains 1 molecule of ribosomal RNA (18S rRNA) and at least 33 different proteins. The large 60S subunit contains 3 rRNA molecules (25S, 5.8S and 5S rRNA) and at least 46 different proteins. Interacts with uS2A and uS2B, strongest interaction is with uS2B.

It is found in the cytoplasm. The protein localises to the nucleus. Its function is as follows. Component of the ribosome, a large ribonucleoprotein complex responsible for the synthesis of proteins in the cell. The small ribosomal subunit (SSU) binds messenger RNAs (mRNAs) and translates the encoded message by selecting cognate aminoacyl-transfer RNA (tRNA) molecules. The large subunit (LSU) contains the ribosomal catalytic site termed the peptidyl transferase center (PTC), which catalyzes the formation of peptide bonds, thereby polymerizing the amino acids delivered by tRNAs into a polypeptide chain. The nascent polypeptides leave the ribosome through a tunnel in the LSU and interact with protein factors that function in enzymatic processing, targeting, and the membrane insertion of nascent chains at the exit of the ribosomal tunnel. eS21 is required for the processing of the 20S rRNA-precursor to mature 18S rRNA in a late step of the maturation of 40S ribosomal subunits. Has a physiological role leading to 18S rRNA stability. This chain is Small ribosomal subunit protein eS21 (rps21), found in Schizosaccharomyces pombe (strain 972 / ATCC 24843) (Fission yeast).